A 231-amino-acid chain; its full sequence is Cytochrome c oxidase assembly factor 7 (231 aa).

Ala2 is modified (N-acetylalanine). Sel1-like repeat units follow at residues 34 to 66 (PDGCYRLVDYLEGIRKNFDEAAKVLKFNCEENQ), 68 to 104 (SDSCYKLGAYYVTGKGGLTQDLKAAARCFLMACEKPG), 108 to 146 (IAACHNVGLLAHDGQVNEDGQPDLGKARDYYTRACDGGY), 147 to 183 (TSSCFNLSAMFLQGAPGFPKDMDLACKYSMKACDLGH), and 184 to 219 (IWACANASRMYKLGDGVDKDEAKAEVLKNRAQQLHK).

Belongs to the hcp beta-lactamase family. In terms of assembly, interacts with CHCHD4/MIA40 through transient intermolecular disulfide bonds.

The protein localises to the mitochondrion intermembrane space. In terms of biological role, required for assembly of mitochondrial respiratory chain complex I and complex IV. The protein is Cytochrome c oxidase assembly factor 7 (COA7) of Homo sapiens (Human).